Consider the following 441-residue polypeptide: Ribulose bisphosphate carboxylase large chain (441 aa).

Residues N89 and T139 each contribute to the substrate site. K141 acts as the Proton acceptor in catalysis. K143 contributes to the substrate binding site. Residues K167, D169, and E170 each contribute to the Mg(2+) site. K167 is modified (N6-carboxylysine). H260 (proton acceptor) is an active-site residue. Substrate-binding residues include R261, H293, and S345.

The protein belongs to the RuBisCO large chain family. Type I subfamily. In terms of assembly, heterohexadecamer of 8 large chains and 8 small chains; disulfide-linked. The disulfide link is formed within the large subunit homodimers. Requires Mg(2+) as cofactor. In terms of processing, the disulfide bond which can form in the large chain dimeric partners within the hexadecamer appears to be associated with oxidative stress and protein turnover.

It is found in the plastid. The protein localises to the chloroplast. The catalysed reaction is 2 (2R)-3-phosphoglycerate + 2 H(+) = D-ribulose 1,5-bisphosphate + CO2 + H2O. It carries out the reaction D-ribulose 1,5-bisphosphate + O2 = 2-phosphoglycolate + (2R)-3-phosphoglycerate + 2 H(+). Functionally, ruBisCO catalyzes two reactions: the carboxylation of D-ribulose 1,5-bisphosphate, the primary event in carbon dioxide fixation, as well as the oxidative fragmentation of the pentose substrate in the photorespiration process. Both reactions occur simultaneously and in competition at the same active site. The sequence is that of Ribulose bisphosphate carboxylase large chain from Viola sororia (Woolly blue violet).